The sequence spans 903 residues: Translation initiation factor IF-2 (903 aa).

The segment at 49-314 is disordered; the sequence is LNREHGSGPD…GSSLQQGFNK (266 aa). The span at 68 to 82 shows a compositional bias: polar residues; it reads STLNIQGTGGKSKSV. 2 stretches are compositionally biased toward basic and acidic residues: residues 93-163 and 174-225; these read VKRD…EAAE and EVSK…ENAT. Basic residues predominate over residues 265–279; that stretch reads GRARPAKVARQKKSN. Basic and acidic residues predominate over residues 280 to 293; that stretch reads KHSESKADREEARA. One can recognise a tr-type G domain in the interval 402–571; the sequence is PRAPVVTIMG…LLQSEVLELK (170 aa). The segment at 411–418 is G1; that stretch reads GHVDHGKT. Residue 411–418 coordinates GTP; that stretch reads GHVDHGKT. Residues 436–440 form a G2 region; that stretch reads GITQH. A G3 region spans residues 457-460; it reads DTPG. GTP-binding positions include 457-461 and 511-514; these read DTPGH and NKID. Positions 511-514 are G4; it reads NKID. A G5 region spans residues 547–549; sequence SAK.

The protein belongs to the TRAFAC class translation factor GTPase superfamily. Classic translation factor GTPase family. IF-2 subfamily.

Its subcellular location is the cytoplasm. In terms of biological role, one of the essential components for the initiation of protein synthesis. Protects formylmethionyl-tRNA from spontaneous hydrolysis and promotes its binding to the 30S ribosomal subunits. Also involved in the hydrolysis of GTP during the formation of the 70S ribosomal complex. This is Translation initiation factor IF-2 from Cronobacter sakazakii (strain ATCC BAA-894) (Enterobacter sakazakii).